The following is a 119-amino-acid chain: Large ribosomal subunit protein uL14 (119 aa).

Belongs to the universal ribosomal protein uL14 family. As to quaternary structure, part of the 50S ribosomal subunit. Forms a cluster with proteins L3 and L19. In the 70S ribosome, L14 and L19 interact and together make contacts with the 16S rRNA in bridges B5 and B8.

Its function is as follows. Binds to 23S rRNA. Forms part of two intersubunit bridges in the 70S ribosome. The protein is Large ribosomal subunit protein uL14 of Wolbachia pipientis wMel.